A 246-amino-acid polypeptide reads, in one-letter code: Fasciclin-like arabinogalactan protein 11 (246 aa).

An N-terminal signal peptide occupies residues 1-24 (MATSRTFIFSNLFIFFLVIATTYG). The region spanning 34-179 (PTNITAILEK…LAVYQVDQVL (146 aa)) is the FAS1 domain. N-linked (GlcNAc...) asparagine glycosylation is found at Asn36, Asn68, Asn141, and Asn150. The interval 193–222 (PAPEKGGSVSKGSASGGDDGGDSTDSSDAE) is disordered. Ser219 carries the GPI-anchor amidated serine lipid modification. Positions 220–246 (DAERTGFGFGIRITTVAAIAASSSLWI) are cleaved as a propeptide — removed in mature form.

This sequence belongs to the fasciclin-like AGP family. As to expression, expressed in the sclerenchyma cells of inflorescence stems and siliques.

The protein resides in the cell membrane. In terms of biological role, may be a cell surface adhesion protein. This is Fasciclin-like arabinogalactan protein 11 (FLA11) from Arabidopsis thaliana (Mouse-ear cress).